The chain runs to 424 residues: GDP-fucose protein O-fucosyltransferase 2 (424 aa).

The first 20 residues, 1-20 (MHFFPIQLLVLFFAEKIAFA), serve as a signal peptide directing secretion. 51 to 55 (GEGFN) is a GDP-beta-L-fucose binding site. The active-site Proton acceptor is the E52. A disulfide bridge links C154 with C187. Residue N205 is glycosylated (N-linked (GlcNAc...) asparagine). GDP-beta-L-fucose-binding positions include 288-290 (HWR), D366, and 383-384 (TF). C407 and C414 are disulfide-bonded.

Belongs to the glycosyltransferase 68 family. As to expression, expressed in the anterior part of embryos, in the hypodermal and neuronal cells of the head. Expressed at different levels in a variety of cell types after hatching, including neuronal, hypodermal, muscle, intestinal, and somatic gonadal cells. Expressed in the nerve ring around the pharynx, in dorsal and ventral nerve cords, intestine, and a variety of hypodermal cells of L1-L3 larvae. Expressed in gonadal sheath cells, spermatheca, and tissues surrounding the vulva of adult hermaphrodites, and in the body wall muscle and hypodermal cells of adults of both sexes.

It is found in the endoplasmic reticulum. It localises to the golgi apparatus. It carries out the reaction L-seryl-[protein] + GDP-beta-L-fucose = 3-O-(alpha-L-fucosyl)-L-seryl-[protein] + GDP + H(+). It catalyses the reaction L-threonyl-[protein] + GDP-beta-L-fucose = 3-O-(alpha-L-fucosyl)-L-threonyl-[protein] + GDP + H(+). It functions in the pathway protein modification; protein glycosylation. Catalyzes the reaction that attaches fucose through an O-glycosidic linkage to a conserved serine or threonine residue in the consensus sequence C1-X-X-S/T-C2 of thrombospondin type I repeats (TSRs) where C1 and C2 are the first and second cysteines of the repeat, respectively. O-fucosylates members of several protein families including the ADAMTS superfamily and the thrombospondin (TSP) and spondin families. The protein is GDP-fucose protein O-fucosyltransferase 2 (pad-2) of Caenorhabditis elegans.